The sequence spans 744 residues: Tripartite motif-containing protein 3 (744 aa).

Ala2 carries the N-acetylalanine modification. Residues 2 to 290 are interaction with KIF21B; sequence AKREDSPGPE…LAAQAFPERP (289 aa). Ser7 is modified (phosphoserine). The segment at 22-63 adopts an RING-type zinc-finger fold; the sequence is CSICLDRYRCPKVLPCLHTFCERCLQNYIPPQSLTLSCPVCR. Residues 110–151 form a B box-type zinc finger; sequence GRPLSCPNHEGKTMEFYCEACETAMCGECRAGEHREHGTVLL. Positions 115, 118, 138, and 143 each coordinate Zn(2+). A coiled-coil region spans residues 153–224; the sequence is DVVEQHKAAL…RKQALVSDLE (72 aa). The Filamin repeat unit spans residues 317–418; sequence TTSATAHETV…VRGSPFRVRA (102 aa). Residues 419–464 are disordered; the sequence is LRPGDLPPSPDDVKRRVKSPGGPGSHVRQKAVRRPSSMYSTGGKRK. Phosphoserine is present on Ser427. 6 NHL repeats span residues 473-516, 520-563, 564-605, 609-652, 656-699, and 700-743; these read VFRV…FSNE, KFRF…FSPE, GKFK…FQPN, VGRF…YSAD, LFKF…FDSS, and GSFL…YRYL.

The protein belongs to the TRIM/RBCC family. Forms homooligomers. Interacts with TRIM2; this interaction reduces TRIM2 activity. Associates with myosin-Vb (MYO5B) and alpha-actinin-4 (ACTN4). Component of the CART complex, at least composed of ACTN4, HGS/HRS, MYO5B and TRIM3. Interacts with ZFYVE28/LST2. Interacts with KIF21B.

Its subcellular location is the cytoplasm. It is found in the early endosome. The protein localises to the golgi apparatus. It localises to the trans-Golgi network. The protein resides in the cell projection. Its subcellular location is the dendrite. The enzyme catalyses S-ubiquitinyl-[E2 ubiquitin-conjugating enzyme]-L-cysteine + [acceptor protein]-L-lysine = [E2 ubiquitin-conjugating enzyme]-L-cysteine + N(6)-ubiquitinyl-[acceptor protein]-L-lysine.. Functionally, E3 ubiquitin ligase that plays essential roles in neuronal functions such as regulation of neuronal plasticity, learning, and memory. In addition to its neuronal functions, participates in other biological processes such as innate immunity or cell cycle regulation. Component of the cytoskeleton-associated recycling or transport complex in neurons, polyubiquitinates gamma-actin, thus regulating neuronal plasticity, learning, and memory. Ubiquitinates postsynaptic scaffold GKAP, a neuronal substrate involved in synaptic remodeling and thereby modulates dendritic spine morphology. Positively regulates motility of microtubule-dependent motor protein KIF21B. Induces growth arrest via its RING-dependent E3 ligase activity and ubiquinates CDKN1A. Positively regulates TLR3-mediated signaling by mediating 'Lys-63'-linked polyubiquitination of TLR3. In turn, promotes the recognition and sorting of polyubiquitinated TLR3 by the ESCRT complexes. The sequence is that of Tripartite motif-containing protein 3 (Trim3) from Mus musculus (Mouse).